The primary structure comprises 346 residues: UPF0324 membrane protein FN0533 (346 aa).

The next 10 membrane-spanning stretches (helical) occupy residues 5–22, 27–49, 62–81, 86–108, 115–137, 147–169, 216–233, 248–270, 283–305, and 315–337; these read LYGI…WKLG, LVGG…KNRA, VLQY…TIIS, SLPI…AKLI, VILI…APVI, AISV…GDIL, LTRT…AVYN, IFPM…NYFI, INNV…MVAI, and ILSG…LVSI.

This sequence belongs to the UPF0324 family.

It localises to the cell membrane. In Fusobacterium nucleatum subsp. nucleatum (strain ATCC 25586 / DSM 15643 / BCRC 10681 / CIP 101130 / JCM 8532 / KCTC 2640 / LMG 13131 / VPI 4355), this protein is UPF0324 membrane protein FN0533.